We begin with the raw amino-acid sequence, 174 residues long: Keratin-associated protein 1-5 (174 aa).

A 15 X 5 AA repeats of C-C-[QEPVRC]-[TPIVLE]-[SRHVP] region spans residues cysteine 3–proline 172.

The protein belongs to the KRTAP type 1 family. Interacts with hair keratins. Expressed in the middle/upper portions of the hair cortex, in the region termed the keratogenous zone.

In terms of biological role, in the hair cortex, hair keratin intermediate filaments are embedded in an interfilamentous matrix, consisting of hair keratin-associated proteins (KRTAP), which are essential for the formation of a rigid and resistant hair shaft through their extensive disulfide bond cross-linking with abundant cysteine residues of hair keratins. The matrix proteins include the high-sulfur and high-glycine-tyrosine keratins. The polypeptide is Keratin-associated protein 1-5 (KRTAP1-5) (Homo sapiens (Human)).